The chain runs to 130 residues: Small ribosomal subunit protein uS9 (130 aa).

The protein belongs to the universal ribosomal protein uS9 family.

The sequence is that of Small ribosomal subunit protein uS9 from Onion yellows phytoplasma (strain OY-M).